Here is a 106-residue protein sequence, read N- to C-terminus: UPF0145 protein Csac_0771 (106 aa).

The protein belongs to the UPF0145 family.

This is UPF0145 protein Csac_0771 from Caldicellulosiruptor saccharolyticus (strain ATCC 43494 / DSM 8903 / Tp8T 6331).